A 338-amino-acid chain; its full sequence is D-erythrose-4-phosphate dehydrogenase (338 aa).

11–12 (RI) contributes to the NAD(+) binding site. Substrate contacts are provided by residues 153–155 (SCT), Arg199, 212–213 (TK), and Arg235. Cys154 acts as the Nucleophile in catalysis. Asn317 is an NAD(+) binding site.

This sequence belongs to the glyceraldehyde-3-phosphate dehydrogenase family. Epd subfamily. In terms of assembly, homotetramer.

It is found in the cytoplasm. It carries out the reaction D-erythrose 4-phosphate + NAD(+) + H2O = 4-phospho-D-erythronate + NADH + 2 H(+). It participates in cofactor biosynthesis; pyridoxine 5'-phosphate biosynthesis; pyridoxine 5'-phosphate from D-erythrose 4-phosphate: step 1/5. Its function is as follows. Catalyzes the NAD-dependent conversion of D-erythrose 4-phosphate to 4-phosphoerythronate. This chain is D-erythrose-4-phosphate dehydrogenase, found in Shewanella baltica (strain OS223).